Consider the following 449-residue polypeptide: UNC93-like protein MFSD11 (449 aa).

Residues 8-28 form a helical membrane-spanning segment; it reads LFNIIILGVAFMFMFTAFQTC. The N-linked (GlcNAc...) asparagine glycan is linked to Asn-40. Transmembrane regions (helical) follow at residues 53–73, 74–94, 96–116, 138–158, and 170–190; these read AIIY…VAIV, GPQL…AVFN, PFPW…AVLW, IFWA…YFAW, and RTVF…FFLI. Phosphoserine is present on Ser-204. 6 helical membrane-spanning segments follow: residues 239–259, 277–297, 309–329, 359–379, 385–405, and 410–430; these read MLLL…FSGV, LIGL…SLFG, PVVL…FLNM, FLLG…LGFL, APAF…AFFY, and LLHW…LSFF.

It belongs to the unc-93 family.

The protein resides in the membrane. In Pongo abelii (Sumatran orangutan), this protein is UNC93-like protein MFSD11 (MFSD11).